We begin with the raw amino-acid sequence, 217 residues long: Pre-mRNA-splicing factor sap62 (217 aa).

The segment at 54-84 adopts a Matrin-type zinc-finger fold; the sequence is FECRLCLTTHANENSYLTHTQGKKHQTNLAR.

This sequence belongs to the SF3A2 family. As to quaternary structure, belongs to the 40S cdc5-associated complex (or cwf complex), a spliceosome sub-complex reminiscent of a late-stage spliceosome composed of the U2, U5 and U6 snRNAs and at least brr2, cdc5, cwf2/prp3, cwf3/syf1, cwf4/syf3, cwf5/ecm2, spp42/cwf6, cwf7/spf27, cwf8, cwf9, cwf10, cwf11, cwf12, prp45/cwf13, cwf14, cwf15, cwf16, cwf17, cwf18, cwf19, cwf20, cwf21, cwf22, cwf23, cwf24, cwf25, cwf26, cyp7/cwf27, cwf28, cwf29/ist3, lea1, msl1, prp5/cwf1, prp10, prp12/sap130, prp17, prp22, sap61, sap62, sap114, sap145, slu7, smb1, smd1, smd3, smf1, smg1 and syf2.

The protein localises to the nucleus. The protein resides in the cytoplasm. Its function is as follows. Involved in mRNA splicing where it associates with cdc5 and the other cwf proteins as part of the spliceosome. The protein is Pre-mRNA-splicing factor sap62 (sap62) of Schizosaccharomyces pombe (strain 972 / ATCC 24843) (Fission yeast).